Reading from the N-terminus, the 451-residue chain is tRNA modification GTPase MnmE (451 aa).

Residues arginine 25, glutamate 82, and lysine 121 each contribute to the (6S)-5-formyl-5,6,7,8-tetrahydrofolate site. One can recognise a TrmE-type G domain in the interval 217–374 (GMSVVILGRP…LKQHLKTEMG (158 aa)). Asparagine 227 is a K(+) binding site. GTP contacts are provided by residues 227-232 (NAGKSS), 246-252 (TDIAGTT), and 271-274 (DTAG). Residue serine 231 participates in Mg(2+) binding. Residues threonine 246, isoleucine 248, and threonine 251 each coordinate K(+). Residue threonine 252 coordinates Mg(2+). Lysine 451 is a binding site for (6S)-5-formyl-5,6,7,8-tetrahydrofolate.

It belongs to the TRAFAC class TrmE-Era-EngA-EngB-Septin-like GTPase superfamily. TrmE GTPase family. Homodimer. Heterotetramer of two MnmE and two MnmG subunits. It depends on K(+) as a cofactor.

The protein localises to the cytoplasm. In terms of biological role, exhibits a very high intrinsic GTPase hydrolysis rate. Involved in the addition of a carboxymethylaminomethyl (cmnm) group at the wobble position (U34) of certain tRNAs, forming tRNA-cmnm(5)s(2)U34. The chain is tRNA modification GTPase MnmE from Hydrogenovibrio crunogenus (strain DSM 25203 / XCL-2) (Thiomicrospira crunogena).